The sequence spans 251 residues: Cell division protein ZapD (251 aa).

The protein belongs to the ZapD family. As to quaternary structure, interacts with FtsZ.

Its subcellular location is the cytoplasm. In terms of biological role, cell division factor that enhances FtsZ-ring assembly. Directly interacts with FtsZ and promotes bundling of FtsZ protofilaments, with a reduction in FtsZ GTPase activity. This is Cell division protein ZapD from Burkholderia orbicola (strain MC0-3).